The sequence spans 423 residues: Probable multifunctional protein ADE2 (423 aa).

Residues 1–263 (MSSLAEIASR…KVMDITATFS (263 aa)) are SAICAR synthetase. Residues 264–423 (KHQQKCHVLV…NIYNANRKLE (160 aa)) are AIR carboxylase.

The protein in the N-terminal section; belongs to the SAICAR synthetase family. It in the C-terminal section; belongs to the AIR carboxylase family. Class II subfamily.

It carries out the reaction 5-amino-1-(5-phospho-D-ribosyl)imidazole-4-carboxylate + L-aspartate + ATP = (2S)-2-[5-amino-1-(5-phospho-beta-D-ribosyl)imidazole-4-carboxamido]succinate + ADP + phosphate + 2 H(+). It catalyses the reaction 5-amino-1-(5-phospho-D-ribosyl)imidazole-4-carboxylate + H(+) = 5-amino-1-(5-phospho-beta-D-ribosyl)imidazole + CO2. It participates in purine metabolism; IMP biosynthesis via de novo pathway; 5-amino-1-(5-phospho-D-ribosyl)imidazole-4-carboxamide from 5-amino-1-(5-phospho-D-ribosyl)imidazole-4-carboxylate: step 1/2. It functions in the pathway purine metabolism; IMP biosynthesis via de novo pathway; 5-amino-1-(5-phospho-D-ribosyl)imidazole-4-carboxylate from 5-amino-1-(5-phospho-D-ribosyl)imidazole (carboxylase route): step 1/1. The chain is Probable multifunctional protein ADE2 from Caenorhabditis elegans.